We begin with the raw amino-acid sequence, 478 residues long: MAPKKKGKKGKAKGTAIVDGVAPEDMTKEQVEEHVARIREELDREREERNYFQLERDKIHTFWEITRRQLEEKKAELRNKDREMEEAEERHQVEIKVYKQKVKHLLYEHQNNLAEVKAEGTVVMKLAQKEHRTQEGALRKDMRVLKVELKEQELANEVVIKNLCLKQAEEITKMRNDFERQVREIEAKYDKKMKMLRDELDLRRKTEIHEVEERKNGQISTLMQRHEEAFTDIKNYYNDITLNNLALINSLKEQMEDMRKKEEHMEREMAEVTLQNRRLADPLQKAKDEMNEMQKRLGNHERDKQILVCTKARLKVAERELKDLKWEHEVLEQRFIKVQQEREELYRKFADAIQEVQQKTGFKNLLLERKLQALNAAVEKREVQFNEVLAASNLDPTALTLVSRKLEDVLESKNTTIKDLQYELARVCKAHNDLLRTYEAKLLAFGIPLDNVGFKPLETAVIGQTLGQGPAGLVGAPT.

Residues 1 to 12 are compositionally biased toward basic residues; sequence MAPKKKGKKGKA. The interval 1 to 29 is disordered; the sequence is MAPKKKGKKGKAKGTAIVDGVAPEDMTKE. Residues 1–114 are regulates microtubule-binding; the sequence is MAPKKKGKKG…LLYEHQNNLA (114 aa). Coiled-coil stretches lie at residues 24–207 and 242–426; these read EDMT…RKTE and LNNL…ELAR. Positions 115 to 258 are microtubule-binding; sequence EVKAEGTVVM…NSLKEQMEDM (144 aa). Residues 357 to 478 form an interaction with SMO region; that stretch reads QQKTGFKNLL…GPAGLVGAPT (122 aa).

Belongs to the DRC4 family. In terms of assembly, component of the nexin-dynein regulatory complex (N-DRC). Interacts with microtubules. Interacts with SMO. Interacts (via coiled-coil domains) with RAB3B (in GTP-bound form). Interacts with DRC1. Interacts with DRC7. As to expression, highly expressed in adult testes and lung. Weakly or not expressed in other tested tissues.

It localises to the cytoplasm. The protein resides in the cytoskeleton. It is found in the cell projection. The protein localises to the cilium. Its subcellular location is the flagellum. It localises to the cilium axoneme. The protein resides in the cilium basal body. It is found in the golgi apparatus. The protein localises to the flagellum axoneme. Component of the nexin-dynein regulatory complex (N-DRC), a key regulator of ciliary/flagellar motility which maintains the alignment and integrity of the distal axoneme and regulates microtubule sliding in motile axonemes. Plays an important role in the assembly of the N-DRC linker. Plays dual roles at both the primary (or non-motile) cilia to regulate hedgehog signaling and in motile cilia to coordinate cilia movement. Required for proper motile cilia functioning. Positively regulates ciliary smoothened (SMO)-dependent Hedgehog (Hh) signaling pathway by facilitating the trafficking of SMO into the cilium and the stimulation of SMO activity in a GRK2-dependent manner. May play a role in the spermatozoa motility. This Mus musculus (Mouse) protein is Dynein regulatory complex subunit 4 (Gas8).